A 1227-amino-acid polypeptide reads, in one-letter code: RNA-binding protein 20 (1227 aa).

Disordered stretches follow at residues 1–58 (MVLA…QAGL) and 289–374 (GSHV…SKQG). The segment covering 27–42 (PGARASPAPSGPRGMQ) has biased composition (low complexity). Over residues 43–56 (QPPPPPQPPPPPQA) the composition is skewed to pro residues. The segment covering 313 to 331 (QGTNSQWESPHGFSGQSKP) has biased composition (polar residues). The segment at 409 to 443 (HLPHICSICDKKVFDLKDWELHVKGKLHAQKCLVF) adopts a U1-type zinc-finger fold. A Phosphoserine modification is found at S498. The RRM domain occupies 518-593 (RVVHICNLPE…EKLLIRMSKR (76 aa)). Positions 624-634 (EADRYGPERPR) are enriched in basic and acidic residues. 2 disordered regions span residues 624–906 (EADR…TNME) and 977–1089 (SLKS…ASPP). The segment at 628–655 (YGPERPRSRSPVSRSLSPRSHTPSFTSC) is RS. Phosphoserine is present on residues S635, S637, S640, S642, S660, and S679. A compositionally biased stretch (low complexity) spans 636–660 (RSPVSRSLSPRSHTPSFTSCSSSHS). Basic and acidic residues-rich tracts occupy residues 674 to 709 (DSWEHSPYARREEERDPAPWRDNGDDKRDRMDPWAH) and 716 to 738 (RQLDKAELDERPEGGRPHREKYP). Residues 741-752 (GSPNLPHSVSSY) show a composition bias toward polar residues. A Phosphoserine modification is found at S742. Basic and acidic residues-rich tracts occupy residues 753–772 (KSREDGYYRKEPKAKSDKYL), 784–807 (RKDEARLRESRHPHPDDSGKEDGL), and 816–856 (EGAK…KEEQ). The residue at position 801 (S801) is a Phosphoserine. Phosphoserine occurs at positions 865, 876, 891, 893, 977, 980, and 1013. Residues 868-888 (RQEKEAEFSDPENTRTKKEQD) are compositionally biased toward basic and acidic residues. Over residues 1024 to 1036 (CYEKEAKGVESSD) the composition is skewed to basic and acidic residues. Residues S1048, S1060, S1080, S1115, and S1120 each carry the phosphoserine modification. Residues 1161–1192 (FYCKLCGLFYTSEETAKMSHCRSAVHYRNLQK) form a Matrin-type zinc finger. A compositionally biased stretch (basic and acidic residues) spans 1201–1215 (GLKETEGADSPRPED). Positions 1201-1227 (GLKETEGADSPRPEDSGIVPRFERKKL) are disordered. S1210 carries the post-translational modification Phosphoserine.

In terms of assembly, associates with components of the U1 and U2 U1 small nuclear ribonucleoprotein complexes. Post-translationally, phosphorylation regulates the subcellular localization. Phosphorylation of Ser-635 and Ser-637 in the RS (arginine/serine-rich) region promotes nuclear localization of the protein. In contrast, phosphorylation of the C-terminal disordered region promotes localization to cytoplasmic ribonucleoprotein granules. As to expression, mainly expressed in the heart. Also expressed in skeletal muscle tissues, ovary, small intestine and colon.

It is found in the nucleus. Its subcellular location is the cytoplasm. The protein resides in the cytoplasmic ribonucleoprotein granule. Functionally, RNA-binding protein that acts as a regulator of mRNA splicing of a subset of genes encoding key structural proteins involved in cardiac development, such as TTN (Titin), CACNA1C, CAMK2D or PDLIM5/ENH. Acts as a repressor of mRNA splicing: specifically binds the 5'UCUU-3' motif that is predominantly found within intronic sequences of pre-mRNAs, leading to the exclusion of specific exons in target transcripts. RBM20-mediated exon skipping is hormone-dependent and is essential for TTN isoform transition in both cardiac and skeletal muscles. RBM20-mediated exon skipping of TTN provides substrates for the formation of circular RNA (circRNAs) from the TTN transcripts. Together with RBM24, promotes the expression of short isoforms of PDLIM5/ENH in cardiomyocytes. In Homo sapiens (Human), this protein is RNA-binding protein 20.